A 196-amino-acid polypeptide reads, in one-letter code: Putative NADH dehydrogenase/NAD(P)H nitroreductase xcc-b100_0585 (196 aa).

Belongs to the nitroreductase family. HadB/RutE subfamily. FMN is required as a cofactor.

The protein is Putative NADH dehydrogenase/NAD(P)H nitroreductase xcc-b100_0585 of Xanthomonas campestris pv. campestris (strain B100).